A 130-amino-acid polypeptide reads, in one-letter code: Small ribosomal subunit protein uS8 (130 aa).

The protein belongs to the universal ribosomal protein uS8 family. In terms of assembly, part of the 30S ribosomal subunit. Contacts proteins S5 and S12.

One of the primary rRNA binding proteins, it binds directly to 16S rRNA central domain where it helps coordinate assembly of the platform of the 30S subunit. This Shewanella piezotolerans (strain WP3 / JCM 13877) protein is Small ribosomal subunit protein uS8.